A 236-amino-acid polypeptide reads, in one-letter code: Cell division protein FtsQ (236 aa).

The Cytoplasmic portion of the chain corresponds to 1–14 (MWDNHQALNQVADW). A helical transmembrane segment spans residues 15-37 (LFTLAGLTTIYLMVQWTIHLPLL). Positions 37 to 111 (LPLKEVHIRS…NGLDVVVEEH (75 aa)) constitute a POTRA domain. Residues 38-236 (PLKEVHIRSN…VSGFAARGTR (199 aa)) lie on the Periplasmic side of the membrane.

It belongs to the FtsQ/DivIB family. FtsQ subfamily. Part of a complex composed of FtsB, FtsL and FtsQ.

Its subcellular location is the cell inner membrane. In terms of biological role, essential cell division protein. May link together the upstream cell division proteins, which are predominantly cytoplasmic, with the downstream cell division proteins, which are predominantly periplasmic. May control correct divisome assembly. This Nitrosospira multiformis (strain ATCC 25196 / NCIMB 11849 / C 71) protein is Cell division protein FtsQ.